The primary structure comprises 266 residues: Uxu operon regulator (266 aa).

An HTH gntR-type domain is found at 23–91 (NRTYTRIGQL…KGSGVYVVRT (69 aa)). Positions 51 to 70 (EREISEKFGVSRTIVREAMV) form a DNA-binding region, H-T-H motif.

Its function is as follows. Repressor for the uxuRBA operon. The protein is Uxu operon regulator (uxuR) of Haemophilus influenzae (strain ATCC 51907 / DSM 11121 / KW20 / Rd).